The chain runs to 209 residues: MGKCQVISHPLIQHKLSILRRQTTSTKDFRELVNEIAMLMGYEVSRDLPLEDVDIQTPVSKTVQKQLAGKKLAIVPILRAGIGMVDGLLSLVPAAKVGHIGMYRNEETLEPVEYLVKLPEDINQRQIFLVDPMLATGGSAILAVDSLKKRGAANIKFVCLVAAPEGVKKLQEAHPDIDIFTAALDDHLNDHGYIVPGLGDAGDRLFGPK.

5-phospho-alpha-D-ribose 1-diphosphate contacts are provided by residues Arg-79, Arg-104, and 131 to 139 (DPMLATGGS). Uracil contacts are provided by residues Ile-194 and 199 to 201 (GDA). Asp-200 is a binding site for 5-phospho-alpha-D-ribose 1-diphosphate.

Belongs to the UPRTase family. Mg(2+) is required as a cofactor.

It carries out the reaction UMP + diphosphate = 5-phospho-alpha-D-ribose 1-diphosphate + uracil. The protein operates within pyrimidine metabolism; UMP biosynthesis via salvage pathway; UMP from uracil: step 1/1. Its activity is regulated as follows. Allosterically activated by GTP. Its function is as follows. Catalyzes the conversion of uracil and 5-phospho-alpha-D-ribose 1-diphosphate (PRPP) to UMP and diphosphate. The protein is Uracil phosphoribosyltransferase of Streptococcus pyogenes serotype M49 (strain NZ131).